The following is a 518-amino-acid chain: Dihydro-ML-236C monooxygenase mlcC (518 aa).

Topologically, residues 1-31 are cytoplasmic; the sequence is MLGQVLLTVESYQWVSTPQALVAVAVLLSLI. The helical; Signal-anchor for type II membrane protein transmembrane segment at 32–48 threads the bilayer; sequence AYRLRGRQSELQVYNPK. The Lumenal portion of the chain corresponds to 49 to 518; that stretch reads KWWELTTMRA…EDIPLPHDRC (470 aa). Position 454 (C454) interacts with heme.

Belongs to the cytochrome P450 family. Heme serves as cofactor.

It is found in the endoplasmic reticulum membrane. The enzyme catalyses dihydro-ML-236C carboxylate + reduced [NADPH--hemoprotein reductase] + O2 = ML-236C carboxylate + oxidized [NADPH--hemoprotein reductase] + 2 H2O + H(+). It catalyses the reaction ML-236C carboxylate + reduced [NADPH--hemoprotein reductase] + O2 = ML-236A carboxylate + oxidized [NADPH--hemoprotein reductase] + H2O + H(+). It participates in polyketide biosynthesis. Functionally, dihydro-ML-236C carboxylate monooxygenase; part of the gene cluster that mediates the biosynthesis of compactin, also known as mevastatin or ML-236B, and which acts as a potent competitive inhibitor of HMG-CoA reductase. Compactin biosynthesis is performed in two stages. The first stage is catalyzed by the nonaketide synthase mlcA, which belongs to type I polyketide synthases and catalyzes the iterative nine-step formation of the polyketide. This PKS stage is completed by the action of dehydrogenase mlcG, which catalyzes the NADPH-dependent reduction of the unsaturated tetra-, penta- and heptaketide intermediates that arise during the mlcA-mediated biosynthesis of the nonaketide chain and leads to dihydro-ML-236C carboxylate. Covalently bound dihydro-ML-236C carboxylate is released from mlcA by the mlcF esterase. Conversion of dihydro-ML-236C carboxylate into ML-236A carboxylate is subsequently performed with the participation of molecular oxygen and P450 monoogygenase mlcC. Finally, mlcH performs the conversion of ML-236A carboxylate to ML-236B/compactin carboxylate through the addition of the side-chain diketide moiety produced by the diketide synthase mlcB. The polypeptide is Dihydro-ML-236C monooxygenase mlcC (Penicillium citrinum).